The primary structure comprises 176 residues: Ribosome maturation factor RimM (176 aa).

The 70-residue stretch at 101–170 (EGEYFESDLI…RITVELPEGL (70 aa)) folds into the PRC barrel domain.

The protein belongs to the RimM family. In terms of assembly, binds ribosomal protein uS19.

It is found in the cytoplasm. Functionally, an accessory protein needed during the final step in the assembly of 30S ribosomal subunit, possibly for assembly of the head region. Essential for efficient processing of 16S rRNA. May be needed both before and after RbfA during the maturation of 16S rRNA. It has affinity for free ribosomal 30S subunits but not for 70S ribosomes. The chain is Ribosome maturation factor RimM from Solibacter usitatus (strain Ellin6076).